Consider the following 389-residue polypeptide: Putative sugar efflux transporter DR_1322 (389 aa).

The next 12 helical transmembrane spans lie at 10-30 (AVLL…LFAV), 34-54 (GMTP…AVLV), 69-89 (KPLV…LSGV), 96-116 (MATG…VFAF), 135-155 (VLRA…AAVL), 161-181 (SGVF…LLFI), 211-231 (GWVV…MVMF), 246-266 (VGFL…LFVL), 281-301 (LLLF…PLLI), 308-328 (AAVL…LMPG), 341-361 (SVVG…VFGY), and 363-383 (PVFL…LWAT).

Belongs to the major facilitator superfamily. Set transporter family.

It is found in the cell membrane. In terms of biological role, involved in the efflux of sugars. The physiological role may be the detoxification of non-metabolizable sugar analogs. This chain is Putative sugar efflux transporter DR_1322, found in Deinococcus radiodurans (strain ATCC 13939 / DSM 20539 / JCM 16871 / CCUG 27074 / LMG 4051 / NBRC 15346 / NCIMB 9279 / VKM B-1422 / R1).